The sequence spans 194 residues: Cysteine and glycine-rich protein 3 (194 aa).

The interval 1-5 is interaction with TCAP; sequence MPNWG. The LIM zinc-binding 1 domain maps to 10 to 61; it reads CGACEKTVYHAEEIQCNGRSFHKTCFHCMACRKALDSTTVAAHESEIYCKVC. The Nuclear localization signal motif lies at 64 to 69; the sequence is RRYGPK. Positions 94–105 are interaction with CLF2; the sequence is QSPKPARAATTS. Phosphoserine occurs at positions 95, 111, and 153. Positions 120 to 171 constitute an LIM zinc-binding 2 domain; sequence CPRCGKSVYAAEKVMGGGKPWHKTCFRCAICGKSLESTNVTDKDGELYCKVC.

As to quaternary structure, self-associates. Oligomeric in the cytoplasm and monomeric in the nucleus. Homooligomers preferentially form along the actin cytoskeleton. Interacts with TCAP. Interacts with LDHD, MYOD1, MYOG, ACTN2, NRAP, MYF6. Interacts (via N-terminus)D with GLRX3 (via C-terminus) and PPP3CA; GLRX3 and calcineurin compete for interaction with CSRP3. Interacts with CFL2; the stoichiometry influences F-actin depolymerization and possibly two molecules of CFL2 can interact with one molecule of CSRP3 resulting in the highest functional impact; the interaction is stronger with phosphorylated CFL2. Phosphorylated by PKC/PRKCA.

The protein resides in the nucleus. The protein localises to the cytoplasm. It localises to the cytoskeleton. Its subcellular location is the myofibril. It is found in the sarcomere. The protein resides in the z line. Positive regulator of myogenesis. Acts as a cofactor for myogenic bHLH transcription factors such as MYOD1, and probably MYOG and MYF6. Enhances the DNA-binding activity of the MYOD1:TCF3 isoform E47 complex and may promote formation of a functional MYOD1:TCF3 isoform E47:MEF2A complex involved in myogenesis. Plays a crucial and specific role in the organization of cytosolic structures in cardiomyocytes. Could play a role in mechanical stretch sensing. May be a scaffold protein that promotes the assembly of interacting proteins at Z-line structures. It is essential for calcineurin anchorage to the Z line. Required for stress-induced calcineurin-NFAT activation. The role in regulation of cytoskeleton dynamics by association with CFL2 is reported conflictingly. Proposed to contribute to the maintenance of muscle cell integrity through an actin-based mechanism. Can directly bind to actin filaments, cross-link actin filaments into bundles without polarity selectivity and protect them from dilution- and cofilin-mediated depolymerization; the function seems to involve its self-association. In vitro can inhibit PKC/PRKCA activity. Proposed to be involved in cardiac stress signaling by down-regulating excessive PKC/PRKCA signaling. In Mus musculus (Mouse), this protein is Cysteine and glycine-rich protein 3 (Csrp3).